We begin with the raw amino-acid sequence, 345 residues long: Protein RecA (345 aa).

68 to 75 serves as a coordination point for ATP; that stretch reads GVESSGKT.

This sequence belongs to the RecA family.

It localises to the cytoplasm. Its function is as follows. Can catalyze the hydrolysis of ATP in the presence of single-stranded DNA, the ATP-dependent uptake of single-stranded DNA by duplex DNA, and the ATP-dependent hybridization of homologous single-stranded DNAs. It interacts with LexA causing its activation and leading to its autocatalytic cleavage. In Aquifex aeolicus (strain VF5), this protein is Protein RecA.